A 101-amino-acid chain; its full sequence is Small ribosomal subunit protein bS21 (101 aa).

Basic and acidic residues predominate over residues 36–52 (YEKPSEKKAREKAEAVR). The segment at 36-101 (YEKPSEKKAR…GPGAGPRGPR (66 aa)) is disordered. Basic residues predominate over residues 53 to 62 (RARKLARKKL). Over residues 83-101 (PGAGGPGAGGPGAGPRGPR) the composition is skewed to gly residues.

It belongs to the bacterial ribosomal protein bS21 family.

The polypeptide is Small ribosomal subunit protein bS21 (Rhodopseudomonas palustris (strain HaA2)).